The following is a 176-amino-acid chain: 2-C-methyl-D-erythritol 2,4-cyclodiphosphate synthase (176 aa).

3 residues coordinate a divalent metal cation: Asp-23, His-25, and His-60. Residue 23–25 (DSH) participates in 4-CDP-2-C-methyl-D-erythritol 2-phosphate binding. 149 to 152 (TSGE) provides a ligand contact to 4-CDP-2-C-methyl-D-erythritol 2-phosphate.

Belongs to the IspF family. Homotrimer. The cofactor is a divalent metal cation.

It carries out the reaction 4-CDP-2-C-methyl-D-erythritol 2-phosphate = 2-C-methyl-D-erythritol 2,4-cyclic diphosphate + CMP. Its pathway is isoprenoid biosynthesis; isopentenyl diphosphate biosynthesis via DXP pathway; isopentenyl diphosphate from 1-deoxy-D-xylulose 5-phosphate: step 4/6. Functionally, involved in the biosynthesis of isopentenyl diphosphate (IPP) and dimethylallyl diphosphate (DMAPP), two major building blocks of isoprenoid compounds. Catalyzes the conversion of 4-diphosphocytidyl-2-C-methyl-D-erythritol 2-phosphate (CDP-ME2P) to 2-C-methyl-D-erythritol 2,4-cyclodiphosphate (ME-CPP) with a corresponding release of cytidine 5-monophosphate (CMP). The protein is 2-C-methyl-D-erythritol 2,4-cyclodiphosphate synthase of Chlamydia abortus (strain DSM 27085 / S26/3) (Chlamydophila abortus).